The sequence spans 344 residues: L-rhamnose-proton symporter (344 aa).

A run of 10 helical transmembrane segments spans residues 4–24, 38–58, 68–88, 101–121, 137–157, 175–195, 214–234, 259–279, 290–310, and 323–343; these read AITM…CFYA, WSVG…ALLL, FSLS…IGNI, MGIG…TPII, TLLG…AGQL, LVLA…MNAA, LPSY…FCFI, VLLS…YAWG, ISWM…GLVL, and VLSL…IGMA.

It belongs to the L-rhamnose transporter (TC 2.A.7.6) family.

The protein localises to the cell inner membrane. It catalyses the reaction L-rhamnopyranose(in) + H(+)(in) = L-rhamnopyranose(out) + H(+)(out). Its function is as follows. Uptake of L-rhamnose across the cytoplasmic membrane with the concomitant transport of protons into the cell (symport system). The protein is L-rhamnose-proton symporter of Shigella boydii serotype 18 (strain CDC 3083-94 / BS512).